Consider the following 416-residue polypeptide: Squalene synthase (416 aa).

The next 2 membrane-spanning stretches (helical) occupy residues 285–304 (VINFCAIPQVMAIGTLNACY) and 386–406 (FISYDWMAVTSLAVSSAFLIA).

This sequence belongs to the phytoene/squalene synthase family. Mg(2+) serves as cofactor.

It localises to the endoplasmic reticulum membrane. It carries out the reaction 2 (2E,6E)-farnesyl diphosphate + NADPH + H(+) = squalene + 2 diphosphate + NADP(+). The catalysed reaction is 2 (2E,6E)-farnesyl diphosphate + NADH + H(+) = squalene + 2 diphosphate + NAD(+). The protein operates within terpene metabolism; lanosterol biosynthesis; lanosterol from farnesyl diphosphate: step 1/3. The polypeptide is Squalene synthase (fdfT) (Dictyostelium discoideum (Social amoeba)).